Reading from the N-terminus, the 118-residue chain is V-type proton ATPase subunit G 2 (118 aa).

A disordered region spans residues 23–91 (ADARKRKARR…QGMQSSQQRN (69 aa)). Residues 35–55 (QAKEEAQMEVEQYRREREQEF) are compositionally biased toward basic and acidic residues. 2 stretches are compositionally biased toward polar residues: residues 56–69 (QSKQQAAMGSQGNL) and 78–89 (RRQVQGMQSSQQ).

This sequence belongs to the V-ATPase G subunit family. In terms of assembly, V-ATPase is a heteromultimeric enzyme made up of two complexes: the ATP-hydrolytic V1 complex and the proton translocation V0 complex. The V1 complex consists of three catalytic AB heterodimers that form a heterohexamer, three peripheral stalks each consisting of EG heterodimers, one central rotor including subunits D and F, and the regulatory subunits C and H. The proton translocation complex V0 consists of the proton transport subunit a, a ring of proteolipid subunits c9c'', rotary subunit d, subunits e and f, and the accessory subunits ATP6AP1/Ac45 and ATP6AP2/PRR.

The protein localises to the melanosome. It localises to the cytoplasmic vesicle. Its subcellular location is the clathrin-coated vesicle membrane. Subunit of the V1 complex of vacuolar(H+)-ATPase (V-ATPase), a multisubunit enzyme composed of a peripheral complex (V1) that hydrolyzes ATP and a membrane integral complex (V0) that translocates protons. V-ATPase is responsible for acidifying and maintaining the pH of intracellular compartments and in some cell types, is targeted to the plasma membrane, where it is responsible for acidifying the extracellular environment. The polypeptide is V-type proton ATPase subunit G 2 (Atp6v1g2) (Mus musculus (Mouse)).